We begin with the raw amino-acid sequence, 279 residues long: MNYNDKSLSALKLGQKTEYKSEYDPTLLQPVPRKLNRDGLGITEQQPFDRGADVWTCYELSWLNENGLPQVAIADVAIDFRSENLIESKSFKLYLNSFNQTKFASLEQVEQALAKDLSQCASGQVSVKVYKLSAYTRQPIVDFAGECIDEQDIQIDSYEFSNEHLASVAEGEIVEETLVSHLLKSNCLITSQPDWGSVQIHYIGKKLNREKLLRYLVSFREHNEFHEQCVERIFTDLIQFTQPEKLTVYARYTRRGGLDINPFRSNFEAVPQNLRMARQ.

A substrate-binding site is contributed by 86–88 (IES). 88–89 (SK) provides a ligand contact to NADPH. The Thioimide intermediate role is filled by Cys187. Asp194 acts as the Proton donor in catalysis. Substrate is bound at residue 226 to 227 (HE). 255–256 (RG) lines the NADPH pocket.

It belongs to the GTP cyclohydrolase I family. QueF type 2 subfamily. Homodimer.

The protein localises to the cytoplasm. It carries out the reaction 7-aminomethyl-7-carbaguanine + 2 NADP(+) = 7-cyano-7-deazaguanine + 2 NADPH + 3 H(+). Its pathway is tRNA modification; tRNA-queuosine biosynthesis. Catalyzes the NADPH-dependent reduction of 7-cyano-7-deazaguanine (preQ0) to 7-aminomethyl-7-deazaguanine (preQ1). This chain is NADPH-dependent 7-cyano-7-deazaguanine reductase, found in Actinobacillus pleuropneumoniae serotype 3 (strain JL03).